Here is a 93-residue protein sequence, read N- to C-terminus: Defensin-like protein 229 (93 aa).

The N-terminal stretch at 1–19 is a signal peptide; sequence MKSTTLFMVSCVLIFCVLS. 4 disulfides stabilise this stretch: C38/C93, C48/C72, C56/C84, and C70/C86.

Belongs to the DEFL family. Flower buds.

Its subcellular location is the secreted. In Arabidopsis thaliana (Mouse-ear cress), this protein is Defensin-like protein 229 (SCRL27).